Here is a 704-residue protein sequence, read N- to C-terminus: MRLAFCVLLCAGSLGLCLAFPKETVRWCTVSSQEASKCSSFRHNMKKILPVEGPHVSCVKRTSYLECIRAILANEADAVTIDGGLVFEAGLAPYNLKPVVAEFYGSKDDPQTHYYAVAVVKKGSDFQLSQLRGKKSCHTGLGWSAGWNIPMGILLPPDSGEEAAAKFFSSSCVPCADRMAFPKMCQLCAGKGVEKCACSNHERYFGYSGAFKCLQEDVGDVAFVRHVTVFENLPDKADRDQYELLCKDNTRRPVDDYENCYLAQVPSHAVVARSVDGKEDLIWELLNQAQENFGKDKSAEFQLFSSSHGKDLLFTDACLGFLRVPPKMDAKLYLGYEYFAAIQHLRRVQGTEEPQRVMWCAVGQHERTKCDSWSVLSGGILNCNSEDTMEDCIAAIAKGEADAMSLDGGFLYTAGKCGLVPVLAENYLSQDGKERFGSKCVNTPVEGYYVVAVVKKSDADLTWNSLRGKKSCHIAVGTSAGWIIPMGFIYNQTGSCKLDEFFSQSCAPGSDPESRLCALCSGSISGQPAHTCAPNSHEGYHGFSGALRCLVEKGDVAFVKHPTVLQNTDGRNPEAWAKDLKQEDFQLLCPDGTRKPVTEAQSCHLAAVPSHAVVSRKDKADFVRRMLFNQQELFGRNGFEYMMFQLFKSSTEDLLFSDDTECLANLQDKITYQKYLGPEYLQAIANVRQCFPSELLDACTFHGN.

A signal peptide spans 1–19 (MRLAFCVLLCAGSLGLCLA). Transferrin-like domains are found at residues 25–347 (VRWC…HLRR) and 357–689 (VMWC…NVRQ). 16 cysteine pairs are disulfide-bonded: Cys28–Cys67, Cys38–Cys58, Cys137–Cys213, Cys172–Cys188, Cys175–Cys196, Cys185–Cys198, Cys246–Cys260, Cys360–Cys392, Cys370–Cys383, Cys417–Cys699, Cys440–Cys662, Cys472–Cys549, Cys496–Cys690, Cys506–Cys520, Cys517–Cys532, and Cys589–Cys603. Residue Asn491 is glycosylated (N-linked (GlcNAc...) asparagine).

It belongs to the transferrin family. In terms of assembly, monomer. Interacts (via transferrin-like domain 2) with CA2. In terms of processing, N-glycosylated. As to expression, blood plasma (at protein level).

Its subcellular location is the secreted. In terms of biological role, inhibitor for carbonic anhydrase 2 (CA2). Does not bind iron ions. In Sus scrofa (Pig), this protein is Inhibitor of carbonic anhydrase.